A 364-amino-acid polypeptide reads, in one-letter code: uncharacterized protein (364 aa).

Acidic residues predominate over residues 1–17 (MEPGELMEVDTSQELDE). Positions 1 to 61 (MEPGELMEVD…EEDQSSTETM (61 aa)) are disordered. Basic and acidic residues predominate over residues 19–31 (TSAKETDQPKDAQ).

This is an uncharacterized protein from Caenorhabditis elegans.